A 971-amino-acid chain; its full sequence is Exportin-2 (971 aa).

The 74-residue stretch at 29–102 (AEKFLESVEG…KANIVNLMLS (74 aa)) folds into the Importin N-terminal domain.

This sequence belongs to the XPO2/CSE1 family. In terms of assembly, interacts with cftr.

It is found in the cytoplasm. The protein localises to the nucleus. Its function is as follows. Export receptor for importin alpha. Mediates importin-alpha re-export from the nucleus to the cytoplasm after import substrates have been released into the nucleoplasm. Negatively regulates fluid secretion and plays a role in fluid homeostasis by down-regulating cftr activity. In Oreochromis niloticus (Nile tilapia), this protein is Exportin-2 (cse1l).